We begin with the raw amino-acid sequence, 77 residues long: uncharacterized protein (77 aa).

This is an uncharacterized protein from Homo sapiens (Human).